Consider the following 328-residue polypeptide: DNA-directed RNA polymerase subunit alpha (328 aa).

Residues 1 to 231 form an alpha N-terminal domain (alpha-NTD) region; the sequence is MIQQMQMPEK…DHVRLFSLFS (231 aa). An alpha C-terminal domain (alpha-CTD) region spans residues 252–328; that stretch reads MRKLLMTRIE…MEVTKYRLNQ (77 aa).

Belongs to the RNA polymerase alpha chain family. As to quaternary structure, homodimer. The RNAP catalytic core consists of 2 alpha, 1 beta, 1 beta' and 1 omega subunit. When a sigma factor is associated with the core the holoenzyme is formed, which can initiate transcription.

It catalyses the reaction RNA(n) + a ribonucleoside 5'-triphosphate = RNA(n+1) + diphosphate. In terms of biological role, DNA-dependent RNA polymerase catalyzes the transcription of DNA into RNA using the four ribonucleoside triphosphates as substrates. This is DNA-directed RNA polymerase subunit alpha from Chloroherpeton thalassium (strain ATCC 35110 / GB-78).